Reading from the N-terminus, the 243-residue chain is Orotidine 5'-phosphate decarboxylase (243 aa).

Substrate contacts are provided by residues aspartate 19, lysine 41, 69 to 78 (DLKFFDIPAT), threonine 124, arginine 185, glutamine 194, glycine 214, and arginine 215. Catalysis depends on lysine 71, which acts as the Proton donor.

It belongs to the OMP decarboxylase family. Type 1 subfamily. As to quaternary structure, homodimer.

The enzyme catalyses orotidine 5'-phosphate + H(+) = UMP + CO2. Its pathway is pyrimidine metabolism; UMP biosynthesis via de novo pathway; UMP from orotate: step 2/2. In terms of biological role, catalyzes the decarboxylation of orotidine 5'-monophosphate (OMP) to uridine 5'-monophosphate (UMP). The polypeptide is Orotidine 5'-phosphate decarboxylase (Xanthomonas axonopodis pv. citri (strain 306)).